Reading from the N-terminus, the 199-residue chain is Imidazoleglycerol-phosphate dehydratase (199 aa).

This sequence belongs to the imidazoleglycerol-phosphate dehydratase family.

The protein localises to the cytoplasm. It carries out the reaction D-erythro-1-(imidazol-4-yl)glycerol 3-phosphate = 3-(imidazol-4-yl)-2-oxopropyl phosphate + H2O. It functions in the pathway amino-acid biosynthesis; L-histidine biosynthesis; L-histidine from 5-phospho-alpha-D-ribose 1-diphosphate: step 6/9. In Desulfotalea psychrophila (strain LSv54 / DSM 12343), this protein is Imidazoleglycerol-phosphate dehydratase.